A 328-amino-acid chain; its full sequence is Ribosomal RNA small subunit methyltransferase H (328 aa).

S-adenosyl-L-methionine is bound by residues 37–39, Asp57, Phe83, Asp104, and Gln111; that span reads GGH.

Belongs to the methyltransferase superfamily. RsmH family.

It localises to the cytoplasm. It carries out the reaction cytidine(1402) in 16S rRNA + S-adenosyl-L-methionine = N(4)-methylcytidine(1402) in 16S rRNA + S-adenosyl-L-homocysteine + H(+). Its function is as follows. Specifically methylates the N4 position of cytidine in position 1402 (C1402) of 16S rRNA. This is Ribosomal RNA small subunit methyltransferase H from Neisseria meningitidis serogroup A / serotype 4A (strain DSM 15465 / Z2491).